Here is a 388-residue protein sequence, read N- to C-terminus: Chorismate synthase (388 aa).

NADP(+) contacts are provided by arginine 39 and arginine 45. FMN-binding positions include 130-132 (RSS), 251-252 (NA), glycine 296, 311-315 (KPIPT), and arginine 337.

This sequence belongs to the chorismate synthase family. As to quaternary structure, homotetramer. The cofactor is FMNH2.

It carries out the reaction 5-O-(1-carboxyvinyl)-3-phosphoshikimate = chorismate + phosphate. The protein operates within metabolic intermediate biosynthesis; chorismate biosynthesis; chorismate from D-erythrose 4-phosphate and phosphoenolpyruvate: step 7/7. Functionally, catalyzes the anti-1,4-elimination of the C-3 phosphate and the C-6 proR hydrogen from 5-enolpyruvylshikimate-3-phosphate (EPSP) to yield chorismate, which is the branch point compound that serves as the starting substrate for the three terminal pathways of aromatic amino acid biosynthesis. This reaction introduces a second double bond into the aromatic ring system. This Geobacillus thermodenitrificans (strain NG80-2) protein is Chorismate synthase.